The primary structure comprises 449 residues: Phosphoglucosamine mutase (449 aa).

Serine 100 serves as the catalytic Phosphoserine intermediate. Positions 100, 240, 242, and 244 each coordinate Mg(2+). Serine 100 is modified (phosphoserine).

The protein belongs to the phosphohexose mutase family. Requires Mg(2+) as cofactor. Post-translationally, activated by phosphorylation.

The enzyme catalyses alpha-D-glucosamine 1-phosphate = D-glucosamine 6-phosphate. Functionally, catalyzes the conversion of glucosamine-6-phosphate to glucosamine-1-phosphate. The chain is Phosphoglucosamine mutase from Clostridium novyi (strain NT).